We begin with the raw amino-acid sequence, 877 residues long: AP-5 complex subunit beta-1 (877 aa).

In terms of assembly, probably part of the adaptor protein complex 5 (AP-5), a tetramer composed of AP5B1, AP5M1, AP5S1 and AP5Z1. Interacts with ZFYVE26 and SPG11.

Functionally, as part of AP-5, a probable fifth adaptor protein complex, it may be involved in endosomal transport. This Bos taurus (Bovine) protein is AP-5 complex subunit beta-1 (AP5B1).